Consider the following 502-residue polypeptide: Polyadenylate-binding protein, cytoplasmic and nuclear (502 aa).

RRM domains lie at 14 to 90, 96 to 176, 191 to 275, and 299 to 376; these read LTIY…KKDE, GNIF…LYNP, TNCF…KGQR, and KNLY…YFKN.

It belongs to the polyadenylate-binding protein type-1 family.

It is found in the cytoplasm. The protein resides in the nucleus. Its function is as follows. Binds the poly(A) tail of mRNA. Appears to be an important mediator of the multiple roles of the poly(A) tail in mRNA biogenesis, stability and translation. The chain is Polyadenylate-binding protein, cytoplasmic and nuclear (PAB1) from Encephalitozoon cuniculi (strain GB-M1) (Microsporidian parasite).